The chain runs to 318 residues: NADH-ubiquinone oxidoreductase chain 1 (318 aa).

8 consecutive transmembrane segments (helical) span residues 2–22, 68–88, 100–120, 146–166, 171–191, 222–242, 253–273, and 293–313; these read FMINLLMMIVPILLAVAFLTL, ISMFIMAPILALTLALTMWTP, LGILFMLAMSSLAVYSILWSG, LAIILLSVLLLSGSFTLPTLI, HIWLIVPSWPLAMMWFISTLA, LFFLAEYANIIMMNIFTTILF, ELYTINFVTKSMLLTISFLWV, and FLPLTLALCMWHVTMPIITAG.

The protein belongs to the complex I subunit 1 family. In terms of assembly, core subunit of respiratory chain NADH dehydrogenase (Complex I) which is composed of 45 different subunits.

The protein resides in the mitochondrion inner membrane. It catalyses the reaction a ubiquinone + NADH + 5 H(+)(in) = a ubiquinol + NAD(+) + 4 H(+)(out). Its function is as follows. Core subunit of the mitochondrial membrane respiratory chain NADH dehydrogenase (Complex I) which catalyzes electron transfer from NADH through the respiratory chain, using ubiquinone as an electron acceptor. Essential for the catalytic activity and assembly of complex I. The chain is NADH-ubiquinone oxidoreductase chain 1 (MT-ND1) from Hipposideros armiger terasensis (Formosan leaf-nosed bat).